The primary structure comprises 422 residues: Fasciclin-like arabinogalactan protein 10 (422 aa).

A signal peptide spans 1-25 (MATSRAFTLFAFTLSLLTVASTVSG). FAS1 domains lie at 26 to 172 (HNIT…NAPI) and 187 to 327 (GVSN…DNVL). Asn-27, Asn-128, Asn-162, Asn-190, and Asn-244 each carry an N-linked (GlcNAc...) asparagine glycan. Positions 336–397 (SSSPAPAPEP…PTSSENSNAK (62 aa)) are disordered. The span at 340–374 (APAPEPVSAPTPTPAKSPSPVEAPSPTAASPPAPP) shows a compositional bias: pro residues. Polar residues predominate over residues 386–397 (DSPTSSENSNAK). Residue Asn-398 is the site of GPI-anchor amidated asparagine attachment. The propeptide at 399 to 422 (AAFHVNAPALFTALVTIAATSLLL) is removed in mature form.

It belongs to the fasciclin-like AGP family.

It is found in the cell membrane. In terms of biological role, may be a cell surface adhesion protein. This Arabidopsis thaliana (Mouse-ear cress) protein is Fasciclin-like arabinogalactan protein 10 (FLA10).